The sequence spans 330 residues: ADP-L-glycero-D-manno-heptose-6-epimerase (330 aa).

Residues 11-12, 32-33, Lys-39, Lys-54, 75-79, and Asn-92 each bind NADP(+); these read FI, DN, and EGACS. Tyr-139 serves as the catalytic Proton acceptor. Residue Lys-143 coordinates NADP(+). Asn-168 contributes to the substrate binding site. Residues Val-169 and Lys-177 each coordinate NADP(+). Lys-177 (proton acceptor) is an active-site residue. Residues Arg-179, His-186, 200-203, Arg-213, and Tyr-292 contribute to the substrate site; that span reads FGEY.

The protein belongs to the NAD(P)-dependent epimerase/dehydratase family. HldD subfamily. In terms of assembly, homopentamer. It depends on NADP(+) as a cofactor.

The catalysed reaction is ADP-D-glycero-beta-D-manno-heptose = ADP-L-glycero-beta-D-manno-heptose. Its pathway is nucleotide-sugar biosynthesis; ADP-L-glycero-beta-D-manno-heptose biosynthesis; ADP-L-glycero-beta-D-manno-heptose from D-glycero-beta-D-manno-heptose 7-phosphate: step 4/4. In terms of biological role, catalyzes the interconversion between ADP-D-glycero-beta-D-manno-heptose and ADP-L-glycero-beta-D-manno-heptose via an epimerization at carbon 6 of the heptose. The chain is ADP-L-glycero-D-manno-heptose-6-epimerase from Burkholderia cenocepacia (strain HI2424).